A 331-amino-acid polypeptide reads, in one-letter code: Bifunctional nuclease 1 (331 aa).

Residues Cys-126–Val-261 form the BFN domain. A UVR domain is found at Glu-291–Lys-326.

The protein belongs to the bifunctional nuclease family.

The protein localises to the nucleus. Its function is as follows. Bifunctional nuclease with both RNase and DNase activities. Involved in basal defense response. Participates in abscisic acid-derived callose deposition following infection by a necrotrophic pathogen. This chain is Bifunctional nuclease 1 (BBD1), found in Oryza sativa subsp. japonica (Rice).